The chain runs to 271 residues: 3-methyl-2-oxobutanoate hydroxymethyltransferase (271 aa).

Positions 53 and 92 each coordinate Mg(2+). 3-methyl-2-oxobutanoate is bound by residues 53 to 54, aspartate 92, and lysine 120; that span reads DS. Residue glutamate 122 coordinates Mg(2+). The active-site Proton acceptor is the glutamate 189.

This sequence belongs to the PanB family. In terms of assembly, homodecamer; pentamer of dimers. Mg(2+) is required as a cofactor.

It is found in the cytoplasm. It catalyses the reaction 3-methyl-2-oxobutanoate + (6R)-5,10-methylene-5,6,7,8-tetrahydrofolate + H2O = 2-dehydropantoate + (6S)-5,6,7,8-tetrahydrofolate. Its pathway is cofactor biosynthesis; (R)-pantothenate biosynthesis; (R)-pantoate from 3-methyl-2-oxobutanoate: step 1/2. Functionally, catalyzes the reversible reaction in which hydroxymethyl group from 5,10-methylenetetrahydrofolate is transferred onto alpha-ketoisovalerate to form ketopantoate. This is 3-methyl-2-oxobutanoate hydroxymethyltransferase from Paraburkholderia phytofirmans (strain DSM 17436 / LMG 22146 / PsJN) (Burkholderia phytofirmans).